The chain runs to 436 residues: Na(+)/H(+) antiporter NhaA (436 aa).

Helical transmembrane passes span 14–34 (AGGI…NSTW), 59–79 (LHHW…GLEL), 95–115 (ALPV…YHQF), 125–145 (WGIP…LLAW), 152–172 (IIFL…VIAI), 176–196 (PALH…LLLF), 214–234 (FWYF…FLAF), 300–320 (AIQP…NAGI), 336–356 (IGTC…SSWL), 374–394 (LLGA…IGQL), and 407–427 (LGIL…LFQV).

The protein belongs to the NhaA Na(+)/H(+) (TC 2.A.33) antiporter family.

It localises to the cell inner membrane. The enzyme catalyses Na(+)(in) + 2 H(+)(out) = Na(+)(out) + 2 H(+)(in). Functionally, na(+)/H(+) antiporter that extrudes sodium in exchange for external protons. This is Na(+)/H(+) antiporter NhaA from Acidithiobacillus ferrooxidans (strain ATCC 23270 / DSM 14882 / CIP 104768 / NCIMB 8455) (Ferrobacillus ferrooxidans (strain ATCC 23270)).